The chain runs to 59 residues: MKIFSILLVALIICSISICTEAFGLIDVKCFASSECWTACKKVTGSGQGKCQNNQCRCY.

A signal peptide spans 1–22 (MKIFSILLVALIICSISICTEA). Disulfide bonds link Cys-30–Cys-51, Cys-36–Cys-56, and Cys-40–Cys-58.

Belongs to the short scorpion toxin superfamily. Potassium channel inhibitor family. Alpha-KTx 16 subfamily. As to expression, expressed by the venom gland.

It localises to the secreted. In terms of biological role, alpha-KTx 16.2: inhibits large conductance calcium-activated potassium channels (KCa1.1/Slo-beta4 KCNMA1/KCNMB4). It appears to block channel activity by a simple bimolecular inhibition process. Shows a fast association rate and a slow dissociation rate of binding on rat brain synaptosome. Significantly inhibits voltage-dependent sodium current and voltage-dependent delayed rectifier potassium currents. Significantly inhibits voltage-dependent sodium current (Nav) and voltage-dependent delayed rectifier potassium current. This is Potassium channel toxin alpha-KTx 16.2 from Olivierus martensii (Manchurian scorpion).